The primary structure comprises 350 residues: sn-1 oleoyl-lipid 12-desaturase (350 aa).

Helical transmembrane passes span 41 to 61 (AWTQALLSVVMVGLGYWSLAI) and 64 to 84 (WFLLPIAWIFTGTALTGFFVI). The Histidine box-1 signature appears at 86 to 90 (HDCGH). The helical transmembrane segment at 98 to 118 (WVNDLVGHIFMMPLIYPFHSW) threads the bilayer. The Histidine box-2 signature appears at 122-126 (HNHHH). Transmembrane regions (helical) follow at residues 196–216 (VAVVVLFAAVAFPTLIATTGI) and 219–239 (FVKFWFVPWLGYHFWMSTFTI). The short motif at 287–291 (HHLST) is the Histidine box-3 element.

The protein belongs to the fatty acid desaturase type 2 family. Requires Fe(2+) as cofactor.

The protein localises to the membrane. It carries out the reaction a 1-[(9Z)-octadecenoyl]-2-acyl-glycerolipid + 2 reduced [2Fe-2S]-[ferredoxin] + O2 + 2 H(+) = a 1-[(9Z,12Z)-octadecdienoyl]-2-acyl-glycerolipid + 2 oxidized [2Fe-2S]-[ferredoxin] + 2 H2O. The protein operates within lipid metabolism; polyunsaturated fatty acid biosynthesis. Its function is as follows. Desaturase involved in fatty acid biosynthesis. Introduces a double bond at carbon 12 of oleoyl groups (18:1) attached to the sn-1 position of the glycerol moiety of membrane glycerolipids. The polypeptide is sn-1 oleoyl-lipid 12-desaturase (Anabaena variabilis).